The chain runs to 206 residues: Probable GTP-binding protein EngB (206 aa).

Residues 23–197 form the EngB-type G domain; it reads QGIEVAFAGR…ERVLDKWFGY (175 aa). GTP is bound by residues 31 to 38, 58 to 62, 76 to 79, 143 to 146, and 176 to 178; these read GRSNAGKS, GRTQL, DLPG, TKAD, and FSS. S38 and T60 together coordinate Mg(2+).

The protein belongs to the TRAFAC class TrmE-Era-EngA-EngB-Septin-like GTPase superfamily. EngB GTPase family. It depends on Mg(2+) as a cofactor.

Functionally, necessary for normal cell division and for the maintenance of normal septation. The polypeptide is Probable GTP-binding protein EngB (Pseudoalteromonas atlantica (strain T6c / ATCC BAA-1087)).